We begin with the raw amino-acid sequence, 557 residues long: Small ribosomal subunit protein bS1 (557 aa).

S1 motif domains are found at residues 21–87, 105–171, 192–260, and 277–347; these read GSIV…LSRE, AETV…VSRR, GMEV…LGLK, and GTKL…LGLK. Lys-229, Lys-279, and Lys-363 each carry N6-acetyllysine. S1 motif domains follow at residues 364–434 and 451–520; these read GDRV…LGVK and GAIV…LSVR.

The protein belongs to the bacterial ribosomal protein bS1 family. As to quaternary structure, part of the 30S ribosomal subunit. Some nascent polypeptide chains are able to cross-link to this protein in situ. Can be cross-linked to mRNA in the ribosome. Post-translationally, phosphorylated; probably on a serine.

In terms of biological role, required for translation of most natural mRNAs except for leaderless mRNA. Binds mRNA upstream of the Shine-Dalgarno (SD) sequence and helps it bind to the 30S ribosomal subunit; acts as an RNA chaperone to unfold structured mRNA on the ribosome but is not essential for mRNAs with strong SDs and little 5'-UTR structure, thus it may help fine-tune which mRNAs that are translated. Unwinds dsRNA by binding to transiently formed ssRNA regions; binds about 10 nucleotides. Has a preference for polypyrimidine tracts. Negatively autoregulates its own translation. The polypeptide is Small ribosomal subunit protein bS1 (rpsA) (Escherichia coli O157:H7).